The chain runs to 402 residues: MKNIVLLIMDGLGDNPNPEFFGKTALQAAYRPNLNALCRKSICGLMDPVGPGIRSGSDTSHLSILGYSPERYYNGRGPFEALGLGMELYPGDVAFRANYAYVSDGYVLDRRAGRIRDTCELSRAVSMEIEDVKITVKSGTEHRAAIVMHGPGLSSMVSDSDPHRENERPMEVRPLDKKAEKTARILNEFIKKSREILNKHPVNIKRMNQGLMPANEILIRGAGMVPDLEDFYDRYHLKAACISGTPLIKGICRLAGMDIINMDNLTGRVDENYSGIFEKAHELAKKYDFIIINIKGTDIAGHDRRPDIKRSVIENVDSAISKIINDLDDLLIIVTGDHSTPCNLGDHSGDPVPIMFSSNNIRSDNVMLFDETSVRNGSLRIRGLDVMKIALSLSNRSEKYGA.

Residues 155-174 (SMVSDSDPHRENERPMEVRP) form a disordered region. The span at 160–174 (SDPHRENERPMEVRP) shows a compositional bias: basic and acidic residues.

It belongs to the BPG-independent phosphoglycerate mutase family. A-PGAM subfamily.

The enzyme catalyses (2R)-2-phosphoglycerate = (2R)-3-phosphoglycerate. It participates in carbohydrate degradation; glycolysis; pyruvate from D-glyceraldehyde 3-phosphate: step 3/5. Functionally, catalyzes the interconversion of 2-phosphoglycerate and 3-phosphoglycerate. This is 2,3-bisphosphoglycerate-independent phosphoglycerate mutase from Picrophilus torridus (strain ATCC 700027 / DSM 9790 / JCM 10055 / NBRC 100828 / KAW 2/3).